Consider the following 212-residue polypeptide: ATP-dependent dethiobiotin synthetase BioD (212 aa).

13 to 18 contacts ATP; it reads GIGKTV. Thr17 is a binding site for Mg(2+). The active site involves Lys33. Ser37 is a binding site for substrate. Residue Glu100 coordinates Mg(2+). Residues 100-103 and 184-186 each bind ATP; these read EGAG and PRL.

This sequence belongs to the dethiobiotin synthetase family. As to quaternary structure, homodimer. It depends on Mg(2+) as a cofactor.

Its subcellular location is the cytoplasm. It catalyses the reaction (7R,8S)-7,8-diammoniononanoate + CO2 + ATP = (4R,5S)-dethiobiotin + ADP + phosphate + 3 H(+). It functions in the pathway cofactor biosynthesis; biotin biosynthesis; biotin from 7,8-diaminononanoate: step 1/2. In terms of biological role, catalyzes a mechanistically unusual reaction, the ATP-dependent insertion of CO2 between the N7 and N8 nitrogen atoms of 7,8-diaminopelargonic acid (DAPA, also called 7,8-diammoniononanoate) to form a ureido ring. This Brucella anthropi (strain ATCC 49188 / DSM 6882 / CCUG 24695 / JCM 21032 / LMG 3331 / NBRC 15819 / NCTC 12168 / Alc 37) (Ochrobactrum anthropi) protein is ATP-dependent dethiobiotin synthetase BioD.